A 243-amino-acid polypeptide reads, in one-letter code: Type III pantothenate kinase (243 aa).

7-14 serves as a coordination point for ATP; sequence DIGNTRLK. Substrate-binding positions include Tyr95 and 102 to 105; that span reads GIDR. Residue Asp104 is the Proton acceptor of the active site. Thr126 contributes to the ATP binding site. Thr177 provides a ligand contact to substrate.

This sequence belongs to the type III pantothenate kinase family. In terms of assembly, homodimer. Requires NH4(+) as cofactor. K(+) is required as a cofactor.

The protein localises to the cytoplasm. It catalyses the reaction (R)-pantothenate + ATP = (R)-4'-phosphopantothenate + ADP + H(+). It functions in the pathway cofactor biosynthesis; coenzyme A biosynthesis; CoA from (R)-pantothenate: step 1/5. Functionally, catalyzes the phosphorylation of pantothenate (Pan), the first step in CoA biosynthesis. The chain is Type III pantothenate kinase from Acinetobacter baylyi (strain ATCC 33305 / BD413 / ADP1).